We begin with the raw amino-acid sequence, 98 residues long: uncharacterized protein (98 aa).

The 69-residue stretch at Lys-30 to Glu-98 folds into the MOSC domain.

This is an uncharacterized protein from Haemophilus influenzae (strain ATCC 51907 / DSM 11121 / KW20 / Rd).